We begin with the raw amino-acid sequence, 1241 residues long: eIF-2-alpha kinase GCN2 (1241 aa).

Residues 1–15 (MGRSSSKKKKKRGGS) show a composition bias toward basic residues. Positions 1–33 (MGRSSSKKKKKRGGSGRRGQLKDHGSNADEDNE) are disordered. Residues 37–148 (EEITALSAIF…EAAQEFLSEI (112 aa)) enclose the RWD domain. The segment at 253–321 (PIAKLNTVQE…SLGSWSSDSL (69 aa)) is disordered. Low complexity-rich tracts occupy residues 267–276 (DTSISSFDSS) and 307–321 (NSESESLGSWSSDSL). The region spanning 425 to 731 (FEELKPLGQG…ATELLKHAFP (307 aa)) is the Protein kinase domain. ATP is bound by residues 431–439 (LGQGGFGHV) and Lys454. Asp586 (proton acceptor) is an active-site residue. The histidyl-tRNA synthetase-like stretch occupies residues 819-1219 (IPMRLLSDCP…ELKKEKVVGR (401 aa)).

The protein belongs to the protein kinase superfamily. Ser/Thr protein kinase family. GCN2 subfamily. Homodimer; homodimerization is important for kinase activation by uncharged tRNAs. In terms of tissue distribution, expressed in roots, leaves, stems, buds, flowers, siliques and seedlings.

It localises to the cytoplasm. The enzyme catalyses L-seryl-[protein] + ATP = O-phospho-L-seryl-[protein] + ADP + H(+). It carries out the reaction L-threonyl-[protein] + ATP = O-phospho-L-threonyl-[protein] + ADP + H(+). With respect to regulation, the kinase activity is stimulated upon binding to uncharged tRNAs. Functionally, metabolic-stress sensing protein kinase that phosphorylates the alpha subunit of eukaryotic translation initiation factor 2 eIF-2-alpha in response to low amino acid availability. Plays a role as an activator of the general amino acid control pathway required for adapatation to amino acid starvation. Converts phosphorylated eIF-2-alpha either to a competitive inhibitor of translation initiation, leading to a global protein synthesis repression, and thus to a reduced overall utilization of amino acids, or to a translational initiation activation of specific mRNAs, and hence allowing reprogramming of amino acid biosynthetic gene expression to alleviate nutrient depletion. Binds uncharged tRNAs. This is eIF-2-alpha kinase GCN2 from Arabidopsis thaliana (Mouse-ear cress).